The sequence spans 142 residues: Mini-ribonuclease 3 (142 aa).

The active site involves aspartate 33.

The protein belongs to the MrnC RNase family. Homodimer. Requires Mg(2+) as cofactor.

It localises to the cytoplasm. In terms of biological role, involved in correct processing of both the 5' and 3' ends of 23S rRNA precursor. Processes 30S rRNA precursor transcript even in absence of ribonuclease 3 (Rnc); Rnc processes 30S rRNA into smaller rRNA precursors. This Thermoanaerobacter sp. (strain X514) protein is Mini-ribonuclease 3.